Reading from the N-terminus, the 297-residue chain is Bifunctional protein FolD 2 (297 aa).

Residues 172–174 (GRG), Thr-199, and Val-240 contribute to the NADP(+) site.

Belongs to the tetrahydrofolate dehydrogenase/cyclohydrolase family. In terms of assembly, homodimer.

The enzyme catalyses (6R)-5,10-methylene-5,6,7,8-tetrahydrofolate + NADP(+) = (6R)-5,10-methenyltetrahydrofolate + NADPH. It carries out the reaction (6R)-5,10-methenyltetrahydrofolate + H2O = (6R)-10-formyltetrahydrofolate + H(+). It participates in one-carbon metabolism; tetrahydrofolate interconversion. In terms of biological role, catalyzes the oxidation of 5,10-methylenetetrahydrofolate to 5,10-methenyltetrahydrofolate and then the hydrolysis of 5,10-methenyltetrahydrofolate to 10-formyltetrahydrofolate. The protein is Bifunctional protein FolD 2 of Paenarthrobacter aurescens (strain TC1).